The primary structure comprises 514 residues: MSHNAPLVLMILDGWGYNENDRYNAIAKANTPQWDEWWQTCPHILLKASGLPVGLPDEQMGNSEVGHMHIGAGRVIQQDFTRINEAINNGKFAKNAVFHEVIDQLKKTEKSLHIMGLLSPGGVHSHEQHLFALLALCNQKKFRSVHLHLFLDGRDTPPQSALDSLKCLNEELAKHPVATINSICGRYYAMDRDKRWQRVEPVYNLLTQGKSERQFPDAETAIHFYYKNKISDEFVPPTLIGKEHSIQDGDAVLFFNFRADRARQLTSTFLDPSFKGFERKTLPKLSYFVSMTQYDKNLFTTTAFPPVPLNNTLGEVLSSHGLSQLRIAETEKYAHVTFFFNGGCESVFTNEERIMVPSPQVATYDLQPEMSAHELTKTLIAAINSQDYHVIICNYANADMVGHTGNFEATVQAIECLDQCMQQVWQALKNNGGKLLITADHGNAEEMFSEATNQAHTAHTSEPVPFLYVGGGWHFTHSEGSLIDIAPSLLALLGITPPPEMTGRILLEKNHAHA.

Residues Asp13 and Ser63 each contribute to the Mn(2+) site. Residue Ser63 is the Phosphoserine intermediate of the active site. Residues His124, 154–155 (RD), Arg186, Arg192, 258–261 (RADR), and Lys332 each bind substrate. Mn(2+) is bound by residues Asp399, His403, Asp440, His441, and His459.

This sequence belongs to the BPG-independent phosphoglycerate mutase family. In terms of assembly, monomer. The cofactor is Mn(2+).

It catalyses the reaction (2R)-2-phosphoglycerate = (2R)-3-phosphoglycerate. It participates in carbohydrate degradation; glycolysis; pyruvate from D-glyceraldehyde 3-phosphate: step 3/5. Its function is as follows. Catalyzes the interconversion of 2-phosphoglycerate and 3-phosphoglycerate. This chain is 2,3-bisphosphoglycerate-independent phosphoglycerate mutase, found in Legionella pneumophila (strain Lens).